We begin with the raw amino-acid sequence, 202 residues long: Imidazoleglycerol-phosphate dehydratase (202 aa).

This sequence belongs to the imidazoleglycerol-phosphate dehydratase family.

Its subcellular location is the cytoplasm. It catalyses the reaction D-erythro-1-(imidazol-4-yl)glycerol 3-phosphate = 3-(imidazol-4-yl)-2-oxopropyl phosphate + H2O. It functions in the pathway amino-acid biosynthesis; L-histidine biosynthesis; L-histidine from 5-phospho-alpha-D-ribose 1-diphosphate: step 6/9. In Synechococcus sp. (strain WH7803), this protein is Imidazoleglycerol-phosphate dehydratase.